The following is a 2104-amino-acid chain: Replication polyprotein (2104 aa).

The next 2 helical transmembrane spans lie at 23–43 (LVASPWILLVIAIPLCAFASS) and 70–90 (FNPFGIIIKYFLYFAILYAFI). A coiled-coil region spans residues 289 to 313 (VRVGEIREKVATLRNKLNTLQTKEL). An SF3 helicase domain is found at 329-501 (LEVLLIEVKV…NKMPKRGAID (173 aa)). The tract at residues 1499–1520 (GDCGSPIVLASGKKAGKLIGFH) is viral peptidase. The RdRp catalytic domain occupies 1838–1965 (PNYFDADYKN…SVSDEYKDKY (128 aa)).

In terms of processing, specific enzymatic cleavages in vivo yield mature proteins.

The protein localises to the membrane. The enzyme catalyses RNA(n) + a ribonucleoside 5'-triphosphate = RNA(n+1) + diphosphate. The peptidase activity is involved in polyprotein maturation, possibly along with hosts proteases. Transmembrane protein may be surface viral glycoprotein. RNA-directed RNA polymerase replicates the viral genome. The protein is Replication polyprotein of Drosophila melanogaster (Fruit fly).